The following is a 154-amino-acid chain: Ribonuclease H (154 aa).

Residues 5–146 (EQNIVYLYCD…ADELANRGID (142 aa)) enclose the RNase H type-1 domain. Residues D14, E52, D74, and D138 each coordinate Mg(2+).

It belongs to the RNase H family. Monomer. Mg(2+) serves as cofactor.

It is found in the cytoplasm. The catalysed reaction is Endonucleolytic cleavage to 5'-phosphomonoester.. Functionally, endonuclease that specifically degrades the RNA of RNA-DNA hybrids. The protein is Ribonuclease H of Coxiella burnetii (strain CbuG_Q212) (Coxiella burnetii (strain Q212)).